The sequence spans 160 residues: Interleukin-36 alpha (160 aa).

The propeptide occupies 1–7 (MNKEKEL). Tyr98 is modified (3'-nitrotyrosine).

The protein belongs to the IL-1 family. As to quaternary structure, interacts with TMED10; the interaction mediates the translocation from the cytoplasm into the ERGIC (endoplasmic reticulum-Golgi intermediate compartment) and thereby secretion. N-terminal truncation leads to a dramatic enhancement of its activity (&gt;1000-fold). As to expression, highly expressed in embryonic tissue and in tissues containing epithelial cells. Elevated expression levels are detected in chronic kidney disease; expressed inepithelia from the distal convoluted tubules (DCTs) to the cortical collecting ducts (CCDs) in single nephrons (at protein level).

It localises to the cytoplasm. It is found in the secreted. Its function is as follows. Cytokine that binds to and signals through the IL1RL2/IL-36R receptor which in turn activates NF-kappa-B and MAPK signaling pathways in target cells linked to a pro-inflammatory response. Part of the IL-36 signaling system that is thought to be present in epithelial barriers and to take part in local inflammatory response; similar to the IL-1 system with which it shares the coreceptor IL1RAP. Seems to be involved in skin inflammatory response by acting on keratinocytes, dendritic cells and indirectly on T-cells to drive tissue infiltration, cell maturation and cell proliferation. Induces the production of pro-inflammatory cytokines, including IL-12, Il-1 beta, IL-6, TNF-alpha and IL-23 in bone marrow-derived dendritic cells (BMDCs). Involved in dendritic cell maturation by stimulating the surface expression of CD80, CD86 and MHC class II. Induces the production of IFN-gamma, IL-4 and IL-17 by cultured CD4(+) T-cells and splenocytes. May play a role in pro-inflammatory effects in the lung: induces the expression of CXCL1 and CXCL2 in the lung, and the expression of TNF-alpha, IL-36c, IL-1A, IL-1B, CXCL1 and CXCL2 in isolated splenic CD11c(+) alveolar macrophages. May be involved in T-cell maturation by stimulating the surface expression of CD40 and modestly CD80 and CD86 in splenic CD11c(+) cells. May be involved in CD4(+) T-cell proliferation. Induces NF-kappa B activation in macrophages. The chain is Interleukin-36 alpha from Mus musculus (Mouse).